A 989-amino-acid polypeptide reads, in one-letter code: Translation initiation factor IF-2 (989 aa).

Disordered stretches follow at residues 28-60 (GVTKASEDDSLSETDKARLLDHLRKSHGSTDAD) and 97-397 (VRRD…DQNT). Basic and acidic residues-rich tracts occupy residues 40-60 (ETDKARLLDHLRKSHGSTDAD) and 122-178 (ELQR…EAAK). Residues 182–223 (AAAAEAAAREQQTQASKPAQAAQPAAAKAEPVAAKAAEPVVA) are compositionally biased toward low complexity. The segment covering 231–280 (ERAAAERAAQREAAKKAEDAARQAAEKARAEQEEIAKRRAAAEAEARAIR) has biased composition (basic and acidic residues). Residues 318 to 345 (RPAGEAPARPAAKKPAAAAPAATTTPSA) are compositionally biased toward low complexity. Gly residues predominate over residues 374-387 (TSGGVDRGWRGGPK). The tr-type G domain occupies 489-658 (PRPPVVTVMG…LLQAEVLELK (170 aa)). Residues 498–505 (GHVDHGKT) form a G1 region. Residue 498 to 505 (GHVDHGKT) participates in GTP binding. Residues 523-527 (GITQH) are G2. The tract at residues 544 to 547 (DTPG) is G3. GTP contacts are provided by residues 544–548 (DTPGH) and 598–601 (NKID). Positions 598–601 (NKID) are G4. Residues 634-636 (SAK) form a G5 region.

The protein belongs to the TRAFAC class translation factor GTPase superfamily. Classic translation factor GTPase family. IF-2 subfamily.

It is found in the cytoplasm. One of the essential components for the initiation of protein synthesis. Protects formylmethionyl-tRNA from spontaneous hydrolysis and promotes its binding to the 30S ribosomal subunits. Also involved in the hydrolysis of GTP during the formation of the 70S ribosomal complex. This chain is Translation initiation factor IF-2, found in Paraburkholderia xenovorans (strain LB400).